The chain runs to 940 residues: UvrABC system protein A (940 aa).

Gly-33–Ser-40 contacts ATP. Residues Cys-252–Cys-279 form a C4-type zinc finger. ABC transporter domains are found at residues Trp-309–Leu-586 and Ile-606–Lys-935. Gly-639 to Ser-646 is a binding site for ATP. A C4-type zinc finger spans residues Cys-738 to Cys-764.

The protein belongs to the ABC transporter superfamily. UvrA family. Forms a heterotetramer with UvrB during the search for lesions.

It localises to the cytoplasm. The UvrABC repair system catalyzes the recognition and processing of DNA lesions. UvrA is an ATPase and a DNA-binding protein. A damage recognition complex composed of 2 UvrA and 2 UvrB subunits scans DNA for abnormalities. When the presence of a lesion has been verified by UvrB, the UvrA molecules dissociate. This Lactococcus lactis subsp. lactis (strain IL1403) (Streptococcus lactis) protein is UvrABC system protein A.